Reading from the N-terminus, the 228-residue chain is Ribose-5-phosphate isomerase A (228 aa).

Substrate-binding positions include 32-35, 85-88, and 98-101; these read TGST, DGAD, and KGGG. Catalysis depends on E107, which acts as the Proton acceptor. K125 provides a ligand contact to substrate.

The protein belongs to the ribose 5-phosphate isomerase family. In terms of assembly, homodimer.

The enzyme catalyses aldehydo-D-ribose 5-phosphate = D-ribulose 5-phosphate. It functions in the pathway carbohydrate degradation; pentose phosphate pathway; D-ribose 5-phosphate from D-ribulose 5-phosphate (non-oxidative stage): step 1/1. Functionally, catalyzes the reversible conversion of ribose-5-phosphate to ribulose 5-phosphate. This chain is Ribose-5-phosphate isomerase A, found in Cupriavidus necator (strain ATCC 17699 / DSM 428 / KCTC 22496 / NCIMB 10442 / H16 / Stanier 337) (Ralstonia eutropha).